We begin with the raw amino-acid sequence, 316 residues long: MQEFSLWCDFIERDFLENDFLKLINKGAICGATSNPSLFCEAITKSAFYQDEIAKLKGKKAKEIYETLALKDILQASSALMPLYEKNPNNGYISLEIDPFLEDDAIKSIDEAKRLFKTLNRPNVMIKVPASTSGFEVISALAQASIPINVTLVFSPKIAGEIAQILAKEAQKRAVISVFVSRFDKEIDPLVPKNLQAQSGIINATECYYQISQHANKLISTLFASTGVKSNSLAKDYYIKALCFKNSINTAPLEALNAYLLDPNTEYQTPLKIAEIEAFKKELKTHNIDLENTAQKLLKEGLIAFKQSFEKLLKSF.

The active-site Schiff-base intermediate with substrate is the lysine 127.

It belongs to the transaldolase family. Type 2 subfamily.

The protein resides in the cytoplasm. It catalyses the reaction D-sedoheptulose 7-phosphate + D-glyceraldehyde 3-phosphate = D-erythrose 4-phosphate + beta-D-fructose 6-phosphate. Its pathway is carbohydrate degradation; pentose phosphate pathway; D-glyceraldehyde 3-phosphate and beta-D-fructose 6-phosphate from D-ribose 5-phosphate and D-xylulose 5-phosphate (non-oxidative stage): step 2/3. Transaldolase is important for the balance of metabolites in the pentose-phosphate pathway. This Helicobacter pylori (strain P12) protein is Transaldolase.